A 352-amino-acid polypeptide reads, in one-letter code: uncharacterized protein (352 aa).

To M.pneumoniae MPN_633 (in the N-terminal section), and M.pneumoniae MPN_634 (in the C-terminal section).

This is an uncharacterized protein from Mycoplasma pneumoniae (strain ATCC 29342 / M129 / Subtype 1) (Mycoplasmoides pneumoniae).